Reading from the N-terminus, the 309-residue chain is Cysteinyl leukotriene receptor 2 (309 aa).

Residues 1-26 (MEVTGTPSSYSNRNCTIENFKKEFYP) lie on the Extracellular side of the membrane. N-linked (GlcNAc...) asparagine glycosylation occurs at asparagine 14. Residues 27 to 47 (IIYLIIFFWGALGNGFSIYVF) form a helical membrane-spanning segment. At 48 to 56 (LQTCKKSTS) the chain is on the cytoplasmic side. Residues 57–77 (VNVFMLNLATSDFLFISTLPF) traverse the membrane as a helical segment. Residues 78 to 98 (RADYYFRGSNWIFGDLACRVM) are Extracellular-facing. Cysteines 95 and 171 form a disulfide. A helical membrane pass occupies residues 99 to 119 (SYSLYVNMYTSIYFLTVLSVV). Over 120–138 (RFLATVHPFRMFHVTSVRS) the chain is Cytoplasmic. A helical membrane pass occupies residues 139 to 159 (AWILCGIIWVFIMASSALLLV). The Extracellular portion of the chain corresponds to 160 to 187 (NGQEEKDNIISCLELSPQKFKSLLIMNH). A helical transmembrane segment spans residues 188 to 208 (IAVAVGFLLPFLTLTVCYLLI). Over 209-229 (IRILLKAEIPESGPRAAHRKA) the chain is Cytoplasmic. Residues 230-250 (LTTIVIAMITFLLCFLPYHAL) form a helical membrane-spanning segment. Residues 251 to 271 (RTLHLVTWDKDSCGDVLHKAT) lie on the Extracellular side of the membrane. The helical transmembrane segment at 272 to 292 (VITLTMAAANSCFNPFLYYFA) threads the bilayer. The Cytoplasmic portion of the chain corresponds to 293–309 (GENFKARLRAIFSKVHL).

This sequence belongs to the G-protein coupled receptor 1 family. In terms of tissue distribution, widely expressed at low levels, with highest expression in the spleen, thymus and adrenal gland, and lower in the kidney, brain and peripheral blood leukocytes.

The protein resides in the cell membrane. Receptor for cysteinyl leukotrienes. The response is mediated via a G-protein that activates a phosphatidylinositol-calcium second messenger system. The rank order of affinities for the leukotrienes is LTC4 = LTD4 &gt;&gt; LTE4. In Mus musculus (Mouse), this protein is Cysteinyl leukotriene receptor 2 (Cysltr2).